A 76-amino-acid chain; its full sequence is MKAWMIILLVICVAVVVEQSEARKGRKYLNPGVLDRCRGPNPPAGCHPHNSHHKPRVPVHNYSRGCSRITRCRRDA.

The N-terminal stretch at 1 to 22 is a signal peptide; it reads MKAWMIILLVICVAVVVEQSEA. A disulfide bond links Cys-37 and Cys-46. The N-linked (GlcNAc...) asparagine glycan is linked to Asn-61. Cysteines 66 and 72 form a disulfide.

The protein belongs to the plant rapid alkalinization factor (RALF) family.

It is found in the secreted. In terms of biological role, cell signaling peptide that may regulate plant stress, growth, and development. Mediates a rapid alkalinization of extracellular space by mediating a transient increase in the cytoplasmic Ca(2+) concentration leading to a calcium-dependent signaling events through a cell surface receptor and a concomitant activation of some intracellular mitogen-activated protein kinases. This chain is Protein RALF-like 26 (RALFL26), found in Arabidopsis thaliana (Mouse-ear cress).